The primary structure comprises 132 residues: Small ribosomal subunit protein uS8 (132 aa).

It belongs to the universal ribosomal protein uS8 family. Part of the 30S ribosomal subunit. Contacts proteins S5 and S12.

Its function is as follows. One of the primary rRNA binding proteins, it binds directly to 16S rRNA central domain where it helps coordinate assembly of the platform of the 30S subunit. The sequence is that of Small ribosomal subunit protein uS8 from Clostridium botulinum (strain 657 / Type Ba4).